The chain runs to 214 residues: Pyridoxine/pyridoxamine 5'-phosphate oxidase (214 aa).

Substrate-binding positions include 9–12 and Lys67; that span reads RKDY. FMN is bound by residues 62–67, 77–78, Arg83, Lys84, and Gln106; these read RMVLLK and FT. Substrate is bound by residues Tyr124, Arg128, and Ser132. FMN contacts are provided by residues 141-142 and Trp186; that span reads QS. Substrate is bound at residue 192–194; sequence RLH. Position 196 (Arg196) interacts with FMN.

The protein belongs to the pyridoxamine 5'-phosphate oxidase family. As to quaternary structure, homodimer. Requires FMN as cofactor.

It carries out the reaction pyridoxamine 5'-phosphate + O2 + H2O = pyridoxal 5'-phosphate + H2O2 + NH4(+). The catalysed reaction is pyridoxine 5'-phosphate + O2 = pyridoxal 5'-phosphate + H2O2. The protein operates within cofactor metabolism; pyridoxal 5'-phosphate salvage; pyridoxal 5'-phosphate from pyridoxamine 5'-phosphate: step 1/1. It functions in the pathway cofactor metabolism; pyridoxal 5'-phosphate salvage; pyridoxal 5'-phosphate from pyridoxine 5'-phosphate: step 1/1. In terms of biological role, catalyzes the oxidation of either pyridoxine 5'-phosphate (PNP) or pyridoxamine 5'-phosphate (PMP) into pyridoxal 5'-phosphate (PLP). The polypeptide is Pyridoxine/pyridoxamine 5'-phosphate oxidase (Nostoc punctiforme (strain ATCC 29133 / PCC 73102)).